Reading from the N-terminus, the 557-residue chain is Urease subunit alpha (557 aa).

The Urease domain occupies 130 to 557 (GFIDTHIHWV…LPLTQLYFIY (428 aa)). Residues histidine 135, histidine 137, and lysine 217 each contribute to the Ni(2+) site. Lysine 217 is modified (N6-carboxylysine). Residue histidine 219 participates in substrate binding. The Ni(2+) site is built by histidine 246 and histidine 272. The active-site Proton donor is histidine 320. A Ni(2+)-binding site is contributed by aspartate 360.

Belongs to the metallo-dependent hydrolases superfamily. Urease alpha subunit family. Heterohexamer of 3 UreC (alpha) and 3 UreAB (gamma/beta) subunits. Ni cation serves as cofactor. Carboxylation allows a single lysine to coordinate two nickel ions.

It is found in the cytoplasm. The enzyme catalyses urea + 2 H2O + H(+) = hydrogencarbonate + 2 NH4(+). It participates in nitrogen metabolism; urea degradation; CO(2) and NH(3) from urea (urease route): step 1/1. This Sulfurisphaera tokodaii (strain DSM 16993 / JCM 10545 / NBRC 100140 / 7) (Sulfolobus tokodaii) protein is Urease subunit alpha.